The chain runs to 370 residues: MLKPGIRSVQKRFITETVVRSTQPSVSRRRKTTHFTDKLNKGPSFEDFVNGNAQKFTLDPLEKARQNSEEVQRLPTWLKVPIAKGSNFHKLKNDVKELKLSTVCEEAKCPNIGECWGGGDKSKATATIMLLGDTCTRGCRFCSVKTNRKPSAPDPTEPENTAEAISRWGLGYVVLTTVDRDDLVDGGAYHLAETVQKIKQKAPNILVETLSGDFRGDLEMVKVMALSGLDVYAHNMETVEALTPHVRDRRATYRQSLSVLECAKKTVPTLVTKTSVMLGLGETDEQVLQTMKDLRAIGCDVITFGQYMRPTKRHMKVVEYVTPEKFDYWKQKALELGFLYCASGPLVRSSYKAGESFIENVLRGRSRARI.

The [4Fe-4S] cluster site is built by Cys104, Cys109, Cys115, Cys135, Cys139, Cys142, and Ser350. A Radical SAM core domain is found at 118 to 339; it reads GGDKSKATAT…KQKALELGFL (222 aa).

The protein belongs to the radical SAM superfamily. Lipoyl synthase family. The cofactor is [4Fe-4S] cluster.

It is found in the mitochondrion. The catalysed reaction is [[Fe-S] cluster scaffold protein carrying a second [4Fe-4S](2+) cluster] + N(6)-octanoyl-L-lysyl-[protein] + 2 oxidized [2Fe-2S]-[ferredoxin] + 2 S-adenosyl-L-methionine + 4 H(+) = [[Fe-S] cluster scaffold protein] + N(6)-[(R)-dihydrolipoyl]-L-lysyl-[protein] + 4 Fe(3+) + 2 hydrogen sulfide + 2 5'-deoxyadenosine + 2 L-methionine + 2 reduced [2Fe-2S]-[ferredoxin]. It participates in protein modification; protein lipoylation via endogenous pathway; protein N(6)-(lipoyl)lysine from octanoyl-[acyl-carrier-protein]: step 2/2. Functionally, catalyzes the radical-mediated insertion of two sulfur atoms into the C-6 and C-8 positions of the octanoyl moiety bound to the lipoyl domains of lipoate-dependent enzymes, thereby converting the octanoylated domains into lipoylated derivatives. This is Lipoyl synthase, mitochondrial from Kluyveromyces lactis (strain ATCC 8585 / CBS 2359 / DSM 70799 / NBRC 1267 / NRRL Y-1140 / WM37) (Yeast).